The chain runs to 143 residues: Large ribosomal subunit protein uL11 (143 aa).

The protein belongs to the universal ribosomal protein uL11 family. As to quaternary structure, part of the ribosomal stalk of the 50S ribosomal subunit. Interacts with L10 and the large rRNA to form the base of the stalk. L10 forms an elongated spine to which L12 dimers bind in a sequential fashion forming a multimeric L10(L12)X complex. In terms of processing, one or more lysine residues are methylated.

Functionally, forms part of the ribosomal stalk which helps the ribosome interact with GTP-bound translation factors. The polypeptide is Large ribosomal subunit protein uL11 (Paracidovorax citrulli (strain AAC00-1) (Acidovorax citrulli)).